A 576-amino-acid polypeptide reads, in one-letter code: MGLASTVSLALLGLCSLARAQTSAADAYVSAESPIAQAGILANIGPSGSKSHGAASGVIIASPSTSNPDYLYTWTRDAALVSRALVDEFIEGESSLQSVIDSYVSSQQKLQRVDNPSGSYTSGGLGEPKFNIDLTAFTGAWGRPQRDGPALRAITLITYGNHLLSSGNTSYVTDTIWPVVKADLDYVVSYWNQTGFDLWEEVSSSSFFTTAEQHTALRLGATFATAVGASASTYLTQADNVLCFLQSYWNSNGGYATANTGGGRSGIDANTVLTSIHTFDIEAGCDSVTFQPCSDRALSNLKVYVDSFRGLYSINPTGATDPILTGRYKEDVYYNGNPWYLTTFAVAEQLYDALNTWDKLGSLDVTSTSLAFFKQFDSSITAGTYASSTSEYATLTSAIRNWADGFLEVLADFTPADGGLTEQIDKSSGNPTSAADLTWSYASAITAFKARGGAIPASWGAAGLTVPATCSTGGGGGSGGDTVAVTLNVQATTVYGENIYVTGSVNQLANWSPDNAIALNADNYPTWSVTVNLPANTQIEYKYIRKNNGQVTWESDPNRSITTSASGSFTQNDTWR.

An N-terminal signal peptide occupies residues 1–20 (MGLASTVSLALLGLCSLARA). W141 lines the substrate pocket. N-linked (GlcNAc...) asparagine glycosylation is found at N168 and N192. Catalysis depends on D197, which acts as the Proton acceptor. E200 serves as the catalytic Proton donor. 2 disulfide bridges follow: C243–C470 and C285–C293. The region spanning 477–576 (GSGGDTVAVT…GSFTQNDTWR (100 aa)) is the CBM20 domain. The tract at residues 552-576 (TWESDPNRSITTSASGSFTQNDTWR) is disordered. N558 and N572 each carry an N-linked (GlcNAc...) asparagine glycan.

This sequence belongs to the glycosyl hydrolase 15 family.

It is found in the secreted. The catalysed reaction is Hydrolysis of terminal (1-&gt;4)-linked alpha-D-glucose residues successively from non-reducing ends of the chains with release of beta-D-glucose.. The protein is Glucoamylase ARB_02327-1 of Schizophyllum commune (strain H4-8 / FGSC 9210) (Split gill fungus).